Here is a 365-residue protein sequence, read N- to C-terminus: Dihydroorotate dehydrogenase (quinone) (365 aa).

Residues 61–65 (AGFDK) and Ser85 each bind FMN. Lys65 serves as a coordination point for substrate. 110–114 (NRMGF) is a substrate binding site. The FMN site is built by Asn139 and Asn170. Asn170 lines the substrate pocket. Catalysis depends on Ser173, which acts as the Nucleophile. Position 175 (Asn175) interacts with substrate. 2 residues coordinate FMN: Lys214 and Ser242. 243–244 (NT) is a binding site for substrate. Residues Gly266, Gly295, and 316 to 317 (YS) contribute to the FMN site.

It belongs to the dihydroorotate dehydrogenase family. Type 2 subfamily. In terms of assembly, monomer. It depends on FMN as a cofactor.

Its subcellular location is the cell membrane. The enzyme catalyses (S)-dihydroorotate + a quinone = orotate + a quinol. The protein operates within pyrimidine metabolism; UMP biosynthesis via de novo pathway; orotate from (S)-dihydroorotate (quinone route): step 1/1. Catalyzes the conversion of dihydroorotate to orotate with quinone as electron acceptor. This is Dihydroorotate dehydrogenase (quinone) from Bradyrhizobium diazoefficiens (strain JCM 10833 / BCRC 13528 / IAM 13628 / NBRC 14792 / USDA 110).